Consider the following 534-residue polypeptide: Cytochrome c oxidase subunit 1 (534 aa).

The Mitochondrial matrix segment spans residues 1–14 (MVQRWLYSTNAKDI). The chain crosses the membrane as a helical span at residues 15 to 39 (AVLYFMLAIFSGMAGTAMSLIIRLE). Ca(2+) is bound by residues Glu39, Ala42, and Gly44. The Mitochondrial intermembrane segment spans residues 40–54 (LAAPGSQYLHGNSQL). Residues 55–88 (FNVLVVGHAVLMIFFLVMPALIGGFGNYLLPLMI) form a helical membrane-spanning segment. A Fe(II)-heme a-binding site is contributed by His62. At 89 to 97 (GATDTAFPR) the chain is on the mitochondrial matrix side. Residues 98-118 (INNIAFWVLPMGLVCLVTSTL) traverse the membrane as a helical segment. Residues 119–142 (VESGAGTGWTVYPPLSSIQAHSGP) are Mitochondrial intermembrane-facing. Residues 143–171 (SVDLAIFALHLTSISSLLGAINFIVTTLN) traverse the membrane as a helical segment. Residues 172-183 (MRTNGMTMHKLP) lie on the Mitochondrial matrix side of the membrane. A helical transmembrane segment spans residues 184-215 (LFVWSIFITAFLLLLSLPVLSAGITMLLLDRN). Topologically, residues 216–228 (FNTSFFEVSGGGD) are mitochondrial intermembrane. Residues 229–263 (PILYEHLFWFFGHPEVYILIIPGFGIISHVVSTYS) traverse the membrane as a helical segment. A Cu cation-binding site is contributed by His241. Positions 241 to 245 (HPEVY) form a cross-link, 1'-histidyl-3'-tyrosine (His-Tyr). Tyr245 contacts O2. Topologically, residues 264–269 (KKPVFG) are mitochondrial matrix. A helical membrane pass occupies residues 270-295 (EISMVYAMASIGLLGFLVWSHHMYIV). Cu cation contacts are provided by His290 and His291. The Mitochondrial intermembrane portion of the chain corresponds to 296-298 (GLD). The chain crosses the membrane as a helical span at residues 299-327 (ADTRAYFTSATMIIAIPTGIKIFSWLATI). Residues 328 to 335 (HGGSIRLA) lie on the Mitochondrial matrix side of the membrane. The helical transmembrane segment at 336–358 (TPMLYAIAFLFLFTMGGLTGVAL) threads the bilayer. The Mitochondrial intermembrane portion of the chain corresponds to 359–370 (ANASLDVAFHDT). Residues His368 and Asp369 each contribute to the Mg(2+) site. Residues 371 to 400 (YYVVGHFHYVLSMGAIFSLFAGYYYWSPQI) form a helical membrane-spanning segment. Residue His376 participates in heme a3 binding. His378 serves as a coordination point for Fe(II)-heme a. The Mitochondrial matrix segment spans residues 401 to 406 (LGLNYN). The chain crosses the membrane as a helical span at residues 407–431 (EKLAQIQFWLIFIGANVIFFPMHFL). Topologically, residues 432 to 449 (GINGMPRRIPDYPDAFAG) are mitochondrial intermembrane. Residue Pro441 participates in Ca(2+) binding. A helical transmembrane segment spans residues 450 to 474 (WNYVASIGSFIATLSLFLFIYILYD). At 475–534 (QLVNGLNNKVNNKSVIYNKAPDFVESNTIFNLNTVKSSSIEFLLTSPPAVHSFNTPAVQS) the chain is on the mitochondrial matrix side.

Belongs to the heme-copper respiratory oxidase family. As to quaternary structure, component of the cytochrome c oxidase (complex IV, CIV), a multisubunit enzyme composed of 12 subunits. The complex is composed of a catalytic core of 3 subunits COX1, COX2 and COX3, encoded in the mitochondrial DNA, and 9 supernumerary subunits COX4, COX5A (or COX5B), COX6, COX7, COX8, COX9, COX12, COX13 and COX26, which are encoded in the nuclear genome. The complex exists as a monomer or a dimer and forms supercomplexes (SCs) in the inner mitochondrial membrane with a dimer of ubiquinol-cytochrome c oxidoreductase (cytochrome b-c1 complex, complex III, CIII), resulting in 2 different assemblies (supercomplexes III(2)IV and III(2)IV(2)). Heme serves as cofactor. The cofactor is Cu cation. In terms of processing, the N-terminus is blocked.

The protein resides in the mitochondrion inner membrane. It carries out the reaction 4 Fe(II)-[cytochrome c] + O2 + 8 H(+)(in) = 4 Fe(III)-[cytochrome c] + 2 H2O + 4 H(+)(out). Its pathway is energy metabolism; oxidative phosphorylation. Component of the cytochrome c oxidase, the last enzyme in the mitochondrial electron transport chain which drives oxidative phosphorylation. The respiratory chain contains 3 multisubunit complexes succinate dehydrogenase (complex II, CII), ubiquinol-cytochrome c oxidoreductase (cytochrome b-c1 complex, complex III, CIII) and cytochrome c oxidase (complex IV, CIV), that cooperate to transfer electrons derived from NADH and succinate to molecular oxygen, creating an electrochemical gradient over the inner membrane that drives transmembrane transport and the ATP synthase. Cytochrome c oxidase is the component of the respiratory chain that catalyzes the reduction of oxygen to water. Electrons originating from reduced cytochrome c in the intermembrane space (IMS) are transferred via the dinuclear copper A center (CU(A)) of COX2 and heme A of COX1 to the active site in COX1, a binuclear center (BNC) formed by heme A3 and copper B (CU(B)). The BNC reduces molecular oxygen to 2 water molecules using 4 electrons from cytochrome c in the IMS and 4 protons from the mitochondrial matrix. COX1 is a catalytic core subunit containing heme A and the active site BNC with heme A3 and the copper atom CU(B). This Saccharomyces cerevisiae (strain ATCC 204508 / S288c) (Baker's yeast) protein is Cytochrome c oxidase subunit 1 (COX1).